A 240-amino-acid polypeptide reads, in one-letter code: Phosducin-like protein 2 (240 aa).

The region spanning 54 to 214 is the Phosducin domain; the sequence is QRDKKIDDMS…MLGQAGAVPT (161 aa). A phosphoserine mark is found at S63 and S73. Positions 99–240 are thioredoxin fold; that stretch reads FGSVREISGQ…DLEDKSSDFY (142 aa).

It belongs to the phosducin family.

The protein resides in the cytoplasm. In terms of biological role, modulates the activation of caspases during apoptosis. The sequence is that of Phosducin-like protein 2 from Drosophila melanogaster (Fruit fly).